Here is a 320-residue protein sequence, read N- to C-terminus: Glyoxylate/hydroxypyruvate reductase B (320 aa).

Residues arginine 233 and glutamate 262 contribute to the active site. Histidine 281 (proton donor) is an active-site residue.

It belongs to the D-isomer specific 2-hydroxyacid dehydrogenase family. GhrB subfamily. In terms of assembly, homodimer.

Its subcellular location is the cytoplasm. The enzyme catalyses glycolate + NADP(+) = glyoxylate + NADPH + H(+). The catalysed reaction is (R)-glycerate + NAD(+) = 3-hydroxypyruvate + NADH + H(+). It catalyses the reaction (R)-glycerate + NADP(+) = 3-hydroxypyruvate + NADPH + H(+). Functionally, catalyzes the NADPH-dependent reduction of glyoxylate and hydroxypyruvate into glycolate and glycerate, respectively. The sequence is that of Glyoxylate/hydroxypyruvate reductase B from Pectobacterium carotovorum subsp. carotovorum (strain PC1).